A 411-amino-acid chain; its full sequence is Adenylosuccinate synthetase (411 aa).

GTP-binding positions include 11–17 and 39–41; these read GDEGKGK and GHT. The Proton acceptor role is filled by D12. The Mg(2+) site is built by D12 and G39. Residues 12-15, 37-40, T121, R135, Q215, T230, and R294 each bind IMP; these read DEGK and NAGH. The active-site Proton donor is H40. Residue 290-296 coordinates substrate; it reads TTTKRPR. GTP-binding positions include R296, 322-324, and 400-402; these read KLD and STS.

Belongs to the adenylosuccinate synthetase family. As to quaternary structure, homodimer. The cofactor is Mg(2+).

Its subcellular location is the cytoplasm. The enzyme catalyses IMP + L-aspartate + GTP = N(6)-(1,2-dicarboxyethyl)-AMP + GDP + phosphate + 2 H(+). It participates in purine metabolism; AMP biosynthesis via de novo pathway; AMP from IMP: step 1/2. Its function is as follows. Plays an important role in the de novo pathway of purine nucleotide biosynthesis. Catalyzes the first committed step in the biosynthesis of AMP from IMP. This Helicobacter pylori (strain HPAG1) protein is Adenylosuccinate synthetase.